Consider the following 115-residue polypeptide: Large ribosomal subunit protein P2 (115 aa).

Methionine 1 is subject to N-acetylmethionine. Phosphoserine occurs at positions 17 and 19. Residue lysine 21 is modified to N6-acetyllysine; alternate. At lysine 21 the chain carries N6-succinyllysine; alternate. The span at 78 to 90 (GSAAPAAGSAPAA) shows a compositional bias: low complexity. Residues 78–115 (GSAAPAAGSAPAAAEEKKDEKKEESEESDDDMGFGLFD) are disordered. Serine 79 and serine 86 each carry phosphoserine. Residues 91–101 (AEEKKDEKKEE) are compositionally biased toward basic and acidic residues. 2 positions are modified to phosphoserine: serine 102 and serine 105.

This sequence belongs to the eukaryotic ribosomal protein P1/P2 family. In terms of assembly, heterodimer with P1 at the lateral ribosomal stalk of the large ribosomal subunit.

In terms of biological role, plays an important role in the elongation step of protein synthesis. The sequence is that of Large ribosomal subunit protein P2 (RPLP2) from Homo sapiens (Human).